The sequence spans 177 residues: Inorganic pyrophosphatase (177 aa).

Positions 30, 44, and 56 each coordinate substrate. Residues aspartate 66, aspartate 71, and aspartate 103 each coordinate Mg(2+). Tyrosine 142 contacts substrate.

Belongs to the PPase family. In terms of assembly, homohexamer. The cofactor is Mg(2+).

The protein localises to the cytoplasm. It carries out the reaction diphosphate + H2O = 2 phosphate + H(+). In terms of biological role, catalyzes the hydrolysis of inorganic pyrophosphate (PPi) forming two phosphate ions. The polypeptide is Inorganic pyrophosphatase (Agrobacterium fabrum (strain C58 / ATCC 33970) (Agrobacterium tumefaciens (strain C58))).